The following is a 976-amino-acid chain: Vacuolar membrane protease (976 aa).

At 1 to 15 the chain is on the cytoplasmic side; that stretch reads MKLKSVFRSVLKYRK. Residues 16–36 traverse the membrane as a helical segment; the sequence is TNLSLLLLITYSIITLLYIFD. The Vacuolar segment spans residues 37–359; it reads HERYKLNLPK…KFFVISAKTL (323 aa). 2 N-linked (GlcNAc...) asparagine glycosylation sites follow: N96 and N121. Residues H156 and D168 each contribute to the Zn(2+) site. N-linked (GlcNAc...) asparagine glycosylation is present at N189. The Proton acceptor role is filled by E200. Zn(2+) is bound at residue E201. N-linked (GlcNAc...) asparagine glycans are attached at residues N212 and N217. 2 residues coordinate Zn(2+): E226 and H300. A helical membrane pass occupies residues 360 to 380; it reads FYWNCIFLLVSPVVAIGLYLI. Residues 381–392 are Cytoplasmic-facing; that stretch reads SRDRMTWKSHSW. A helical transmembrane segment spans residues 393-412; sequence LSWTRFPLSLAAGIIVQKLF. The Vacuolar portion of the chain corresponds to 413–428; sequence SNDIIRSNPLTFSRNY. The chain crosses the membrane as a helical span at residues 429–449; it reads FWPISAFFTQVIFTSYVLINC. The Cytoplasmic portion of the chain corresponds to 450–461; the sequence is SNFFFPCADMKS. A helical membrane pass occupies residues 462-482; that stretch reads LSIIELFIILWTILLFTSKLL. The Vacuolar portion of the chain corresponds to 483–496; the sequence is YSSDYRYTGLYPLS. Residues 497–517 form a helical membrane-spanning segment; it reads IFFLLSTIAAILRLLALALGM. Residues 518–627 lie on the Cytoplasmic side of the membrane; that stretch reads RTRKRLGREC…NSLKLEYTDY (110 aa). Positions 528–610 are disordered; that stretch reads RDHHSNYSSH…PLLKGSNSME (83 aa). The segment covering 549–558 has biased composition (polar residues); the sequence is NLEQPQDQFT. Residues 559-570 show a composition bias toward low complexity; it reads SSQDDQASIQDD. Basic and acidic residues predominate over residues 582–601; the sequence is NVDEDHGMDSSSQQHDERVP. A helical transmembrane segment spans residues 628–648; that stretch reads AWIIQFLLIVPIPSFILFNSV. Topologically, residues 649-668 are vacuolar; that stretch reads DVIMDALNHTVQEGSKATFD. N656 carries N-linked (GlcNAc...) asparagine glycosylation. A helical membrane pass occupies residues 669-689; sequence VLRFGMVGSILMALPILPFFY. At 690-692 the chain is on the cytoplasmic side; sequence KVN. Residues 693–713 traverse the membrane as a helical segment; it reads YITISLTALLFLISASKTLLV. The Vacuolar portion of the chain corresponds to 714 to 976; sequence HPFTNSNPLK…LVIVKDAIIL (263 aa). N-linked (GlcNAc...) asparagine glycans are attached at residues N768, N796, N811, N866, and N937.

Belongs to the peptidase M28 family. Zn(2+) is required as a cofactor.

Its subcellular location is the vacuole membrane. In terms of biological role, may be involved in vacuolar sorting and osmoregulation. This Saccharomyces cerevisiae (strain AWRI1631) (Baker's yeast) protein is Vacuolar membrane protease.